The chain runs to 550 residues: Neuronal acetylcholine receptor subunit alpha-9-II (550 aa).

The first 20 residues, 1–20, serve as a signal peptide directing secretion; sequence MRKMVPVVCFATMLLQVAHS. Topologically, residues 21–233 are extracellular; the sequence is AQGRYAQQLL…YTVLLQRRSS (213 aa). N-linked (GlcNAc...) asparagine glycosylation is present at asparagine 52. Cysteine 150 and cysteine 164 are oxidised to a cystine. A glycan (N-linked (GlcNAc...) asparagine) is linked at asparagine 165. A disulfide bridge links cysteine 214 with cysteine 215. 3 helical membrane-spanning segments follow: residues 234–254, 264–284, and 298–318; these read FYIF…PLGF, VSLG…VAES, and YIAT…IMNI. Residues 319 to 528 are Cytoplasmic-facing; it reads HFCGAEAKPV…WKRVAKVMDR (210 aa). Residues 357–439 form a disordered region; the sequence is TSSSSSSSSS…HLSSSKYEGF (83 aa). Positions 358–367 are enriched in low complexity; the sequence is SSSSSSSSSS. Basic residues predominate over residues 413–422; sequence RHPKPRHQHH. A helical membrane pass occupies residues 529–549; sequence FFMWIFFIMVFLMSILIIGKA.

Belongs to the ligand-gated ion channel (TC 1.A.9) family. Acetylcholine receptor (TC 1.A.9.1) subfamily. As to expression, expressed in the brain, liver, olfactory mucosa, pituitary gland and hair cells of the saccule.

Its subcellular location is the postsynaptic cell membrane. It is found in the cell membrane. This is Neuronal acetylcholine receptor subunit alpha-9-II from Oncorhynchus mykiss (Rainbow trout).